Consider the following 220-residue polypeptide: MAKQEYKQLPKRAEVHSATEQFKDTIKTSLGLDLFKGLGLTIKEFFSPSVTIHYPMEQLPLSPRYRAVHHLQRLLDSGSERCIGCGLCEKICTSNCIRIITHKGEDNRKKIDSYTINLGRCIYCGLCAEVCPELAIVMGNRFENASTQRSQYGSKSEFLTSEQDAKNCSHAEFLGFGAVSPNYNERMQATPLDYVQEPSKEESKEESPTSPESHKGDENV.

2 consecutive 4Fe-4S ferredoxin-type domains span residues 71 to 102 and 112 to 141; these read LQRL…IITH and DSYT…MGNR. 8 residues coordinate [4Fe-4S] cluster: Cys-82, Cys-85, Cys-88, Cys-92, Cys-121, Cys-124, Cys-127, and Cys-131. The segment at 187–220 is disordered; the sequence is MQATPLDYVQEPSKEESKEESPTSPESHKGDENV. Basic and acidic residues predominate over residues 198 to 220; the sequence is PSKEESKEESPTSPESHKGDENV.

The protein belongs to the complex I 23 kDa subunit family. As to quaternary structure, NDH-1 is composed of 14 different subunits. Subunits NuoA, H, J, K, L, M, N constitute the membrane sector of the complex. [4Fe-4S] cluster serves as cofactor.

The protein resides in the cell inner membrane. The catalysed reaction is a quinone + NADH + 5 H(+)(in) = a quinol + NAD(+) + 4 H(+)(out). Its function is as follows. NDH-1 shuttles electrons from NADH, via FMN and iron-sulfur (Fe-S) centers, to quinones in the respiratory chain. The immediate electron acceptor for the enzyme in this species is believed to be ubiquinone. Couples the redox reaction to proton translocation (for every two electrons transferred, four hydrogen ions are translocated across the cytoplasmic membrane), and thus conserves the redox energy in a proton gradient. This Helicobacter pylori (strain J99 / ATCC 700824) (Campylobacter pylori J99) protein is NADH-quinone oxidoreductase subunit I.